A 256-amino-acid chain; its full sequence is MDPLSISMESKVVLLGSSDVGKTALSLRYVDGIFPKRLTSTIGASFLTRTINIEGNKIKYLIWDSAGQDRFRSLATLYYRGACVAILVFDITQQKTFDIVKGWVEELKANIQEEIIMVLCGNKIDLEQNRQVKSETAKLYADEINAMYVETSAKENEGVEGMFLEIGKKLILNKHNEYFKQFQQQQKLHKQFQQQNQSLYQYHIQQQKHQQQQQQQQQQIFKNQQFYNNGHLQGSINGHNNQNSTNYSDNSDQCCG.

Position 16-23 (16-23) interacts with GTP; the sequence is GSSDVGKT. The short motif at 38 to 46 is the Effector region element; sequence LTSTIGASF. GTP-binding positions include 64 to 68 and 122 to 125; these read DSAGQ and NKID. Residues 229 to 256 form a disordered region; sequence NGHLQGSINGHNNQNSTNYSDNSDQCCG. The span at 230 to 256 shows a compositional bias: polar residues; sequence GHLQGSINGHNNQNSTNYSDNSDQCCG. Residues Cys-254 and Cys-255 are each lipidated (S-geranylgeranyl cysteine).

This sequence belongs to the small GTPase superfamily. Rab family.

The protein localises to the cell membrane. The sequence is that of Ras-related protein RabJ (rabJ) from Dictyostelium discoideum (Social amoeba).